A 141-amino-acid chain; its full sequence is Nucleoside diphosphate kinase (141 aa).

Residues Lys11, Phe59, Arg87, Thr93, Arg104, and Asn114 each coordinate ATP. His117 acts as the Pros-phosphohistidine intermediate in catalysis.

Belongs to the NDK family. In terms of assembly, homotetramer. Mg(2+) serves as cofactor.

Its subcellular location is the cytoplasm. The enzyme catalyses a 2'-deoxyribonucleoside 5'-diphosphate + ATP = a 2'-deoxyribonucleoside 5'-triphosphate + ADP. It carries out the reaction a ribonucleoside 5'-diphosphate + ATP = a ribonucleoside 5'-triphosphate + ADP. Functionally, major role in the synthesis of nucleoside triphosphates other than ATP. The ATP gamma phosphate is transferred to the NDP beta phosphate via a ping-pong mechanism, using a phosphorylated active-site intermediate. The chain is Nucleoside diphosphate kinase from Paraburkholderia phytofirmans (strain DSM 17436 / LMG 22146 / PsJN) (Burkholderia phytofirmans).